Reading from the N-terminus, the 90-residue chain is Small cell adhesion glycoprotein homolog (90 aa).

The Extracellular portion of the chain corresponds to 1–27; the sequence is MSILPTTDSVPEEAITKASGDVDGFEK. Residues 28-48 traverse the membrane as a helical; Signal-anchor for type III membrane protein segment; that stretch reads AVVGGVIAAVFITLITVVVLI. The Cytoplasmic portion of the chain corresponds to 49 to 90; it reads TVYLYKHKGSYRTNENLEDVEASKTLQMEDSALTPEKKEYFM.

Belongs to the SMAGP family.

The protein resides in the cell membrane. The protein localises to the cytoplasmic vesicle membrane. Its function is as follows. May play a role in epithelial cell-cell contacts. This is Small cell adhesion glycoprotein homolog (smagp) from Xenopus tropicalis (Western clawed frog).